The chain runs to 707 residues: Complement C1r-A subcomponent (707 aa).

An N-terminal signal peptide occupies residues Met-1 to Gly-16. The CUB 1 domain maps to Ser-17–Val-140. Glu-65, Asp-73, and Asp-118 together coordinate Ca(2+). A disulfide bridge links Cys-70 with Cys-88. N-linked (GlcNAc...) asparagine glycosylation is present at Asn-124. The Ca(2+) site is built by Asp-141, Leu-142, and Glu-144. The 49-residue stretch at Asp-141 to Gln-189 folds into the EGF-like; calcium-binding domain. 4 disulfide bridges follow: Cys-145/Cys-164, Cys-160/Cys-173, Cys-175/Cys-188, and Cys-192/Cys-219. Residues Asn-166, Tyr-167, and Gly-170 each coordinate Ca(2+). The residue at position 166 (Asn-166) is a (3R)-3-hydroxyasparagine. Residues Cys-192–Glu-304 form the CUB 2 domain. Ser-205 bears the Phosphoserine; by CK2 mark. The N-linked (GlcNAc...) asparagine glycan is linked to Asn-220. Positions 242, 252, 289, and 293 each coordinate Ca(2+). An intrachain disulfide couples Cys-249 to Cys-267. 2 consecutive Sushi domains span residues Ile-306–Ile-372 and Lys-373–Pro-448. 5 disulfides stabilise this stretch: Cys-308–Cys-357, Cys-337–Cys-370, Cys-375–Cys-428, Cys-405–Cys-446, and Cys-450–Cys-579. A Peptidase S1 domain is found at Ile-463–Gly-704. Residues His-501 and Asp-559 each act as charge relay system in the active site. An N-linked (GlcNAc...) asparagine glycan is attached at Asn-583. 2 disulfide bridges follow: Cys-622–Cys-641 and Cys-652–Cys-682. Ser-656 (charge relay system) is an active-site residue.

This sequence belongs to the peptidase S1 family. Core component of the complement C1 complex, a calcium-dependent complex composed of 1 molecule of the C1Q subcomplex, 2 molecules of C1R and 2 molecules of C1S. The C1Q subcomplex is composed 18 subunits: 3 chains of C1QA, C1QB, and C1QC trimerize to form 6 collagen-like triple helices connected to six globular ligand-recognition modules. Within the C1 complex, C1R is a dimer of identical chains, each of which is activated by cleavage into two chains, heavy and light, connected by disulfide bonds. Post-translationally, cleaved and activated by autocatalytic processing to generate Complement C1r subcomponent heavy and light chains that are connected by disulfide bonds. In terms of processing, the iron and 2-oxoglutarate dependent 3-hydroxylation of aspartate and asparagine is (R) stereospecific within EGF domains.

It is found in the secreted. The protein localises to the cell surface. The enzyme catalyses Selective cleavage of Lys(or Arg)-|-Ile bond in complement subcomponent C1s to form the active form of C1s (EC 3.4.21.42).. With respect to regulation, activated by the C1Q subcomplex of the C1 complex following C1Q binding to immunoglobulins (IgG or IgM) complexed with antigens to form antigen-antibody complexes on the surface of pathogens. Immunoglobulin-binding promotes autoactivation of C1R, which results in the cleavage of the Arg-Ile bond in the catalytic domain. In terms of biological role, serine protease component of the complement C1 complex, a multiprotein complex that initiates the classical pathway of the complement system, a cascade of proteins that leads to phagocytosis and breakdown of pathogens and signaling that strengthens the adaptive immune system. C1R catalyzes the first enzymatic step in the classical complement pathway: it is activated by the C1Q subcomplex of the C1 complex, which associates with IgG or IgM immunoglobulins complexed with antigens to form antigen-antibody complexes on the surface of pathogens. Immunoglobulin-binding promotes the autocatalytic cleavage and activation of C1R. Activated C1R then cleaves and activates C1S, the second protease of the classical complement pathway. It is unclear if C1R activates C1S within single, strained C1 complexes or between neighboring C1 complexes on surfaces. In Mus musculus (Mouse), this protein is Complement C1r-A subcomponent (C1ra).